The primary structure comprises 320 residues: MEIYGMVTGKAGKSGYGSASTAEDVTHSIDAKHLTAIITGGTSGIGLEAARVLGMRGAHVIIAARNTKAANDSKEMILQMYPNARIDCLQLDLSSIKSVRSFIHQFLALNVPLNILINNAGVMFCPFQLSEDGIESQFATNHIGHFLLTNLLLDKMKSSARESGIEGRIVNLSSIAHTYTYTEGIMFDYINDPDRYSEKKAYGQSKLANLLHSNALSRKLQEEGVNITINSVHPGLITTNLFRHSGLGMAVLKAMSFFLWKNIPQGAATTCYVALHPDLKGVTGKYFTDCNVTTPSNFAIDTTLADKLWDFSIKLVDSLP.

NADP(+) is bound by residues 40–46 (GGTSGIG), 92–93 (DL), asparagine 119, and threonine 140. Position 174 (serine 174) interacts with substrate. Tyrosine 196 serves as the catalytic Proton acceptor. The interaction with calmodulin stretch occupies residues 301–317 (DTTLADKLWDFSIKLVD).

The protein belongs to the short-chain dehydrogenases/reductases (SDR) family. Part of the Tic complex.

It is found in the plastid. The protein localises to the chloroplast inner membrane. Its function is as follows. Involved in protein precursor import into chloroplasts. The polypeptide is Short-chain dehydrogenase TIC 32 B, chloroplastic (Brassica napus (Rape)).